A 357-amino-acid polypeptide reads, in one-letter code: Holliday junction branch migration complex subunit RuvB (357 aa).

The segment at 4 to 195 is large ATPase domain (RuvB-L); it reads TDKLAAKAVS…FGIVARLEFY (192 aa). ATP contacts are provided by residues leucine 34, arginine 35, glycine 76, lysine 79, threonine 80, threonine 81, 142-144, arginine 185, tyrosine 195, and arginine 232; that span reads EDY. Threonine 80 provides a ligand contact to Mg(2+). Residues 196-266 form a small ATPAse domain (RuvB-S) region; it reads TPAELAKIVT…VADAALAMLD (71 aa). The segment at 269-357 is head domain (RuvB-H); it reads AVGFDLMDRK…PVRDLWDDNQ (89 aa). Arginine 305, arginine 324, and arginine 329 together coordinate DNA.

The protein belongs to the RuvB family. In terms of assembly, homohexamer. Forms an RuvA(8)-RuvB(12)-Holliday junction (HJ) complex. HJ DNA is sandwiched between 2 RuvA tetramers; dsDNA enters through RuvA and exits via RuvB. An RuvB hexamer assembles on each DNA strand where it exits the tetramer. Each RuvB hexamer is contacted by two RuvA subunits (via domain III) on 2 adjacent RuvB subunits; this complex drives branch migration. In the full resolvosome a probable DNA-RuvA(4)-RuvB(12)-RuvC(2) complex forms which resolves the HJ.

It is found in the cytoplasm. The catalysed reaction is ATP + H2O = ADP + phosphate + H(+). Its function is as follows. The RuvA-RuvB-RuvC complex processes Holliday junction (HJ) DNA during genetic recombination and DNA repair, while the RuvA-RuvB complex plays an important role in the rescue of blocked DNA replication forks via replication fork reversal (RFR). RuvA specifically binds to HJ cruciform DNA, conferring on it an open structure. The RuvB hexamer acts as an ATP-dependent pump, pulling dsDNA into and through the RuvAB complex. RuvB forms 2 homohexamers on either side of HJ DNA bound by 1 or 2 RuvA tetramers; 4 subunits per hexamer contact DNA at a time. Coordinated motions by a converter formed by DNA-disengaged RuvB subunits stimulates ATP hydrolysis and nucleotide exchange. Immobilization of the converter enables RuvB to convert the ATP-contained energy into a lever motion, pulling 2 nucleotides of DNA out of the RuvA tetramer per ATP hydrolyzed, thus driving DNA branch migration. The RuvB motors rotate together with the DNA substrate, which together with the progressing nucleotide cycle form the mechanistic basis for DNA recombination by continuous HJ branch migration. Branch migration allows RuvC to scan DNA until it finds its consensus sequence, where it cleaves and resolves cruciform DNA. The sequence is that of Holliday junction branch migration complex subunit RuvB from Ralstonia pickettii (strain 12J).